Here is a 101-residue protein sequence, read N- to C-terminus: UPF0213 protein lp_2058 (101 aa).

Residues 15–92 form the GIY-YIG domain; sequence KKYYFYVLLC…KHQSRAAKLK (78 aa).

It belongs to the UPF0213 family.

In Lactiplantibacillus plantarum (strain ATCC BAA-793 / NCIMB 8826 / WCFS1) (Lactobacillus plantarum), this protein is UPF0213 protein lp_2058.